The primary structure comprises 339 residues: MKPYPIQFVSIVIPVYNEEQSLPELLRRTEAACRQLKHEFEIVLVDDGSRDESANILQAAAEREDSPVVAVILNRNYGQHAAIMAGFEQCRGDVVITLDADLQNPPEEIPRLVAQAELGYDVVGTVRNNRQDSAFRRWPSKLINLAVQRSTGVAMSDYGCMLRAYRRTIIDAMLACTERSTFIPILANSFARHTTEVLVEHAEREHGDSKYSPMRLINLMFDLITCMTTTPLRLLSIIGFGMAGLGALFALMLIVLRLIFGATWAGDGTFVLFAVLFVFTGGQFIGMGLLGEYLGRMYSDVRARPRFFIEKVLRSQPAAPAPAVTVDGLTSTHTDQVSP.

The next 2 membrane-spanning stretches (helical) occupy residues 235-255 and 270-290; these read LSII…MLIV and FVLF…MGLL.

Belongs to the glycosyltransferase 2 family.

The protein localises to the cell inner membrane. The enzyme catalyses UDP-4-deoxy-4-formamido-beta-L-arabinose + di-trans,octa-cis-undecaprenyl phosphate = 4-deoxy-4-formamido-alpha-L-arabinopyranosyl di-trans,octa-cis-undecaprenyl phosphate + UDP. It functions in the pathway glycolipid biosynthesis; 4-amino-4-deoxy-alpha-L-arabinose undecaprenyl phosphate biosynthesis; 4-amino-4-deoxy-alpha-L-arabinose undecaprenyl phosphate from UDP-4-deoxy-4-formamido-beta-L-arabinose and undecaprenyl phosphate: step 1/2. It participates in bacterial outer membrane biogenesis; lipopolysaccharide biosynthesis. Catalyzes the transfer of 4-deoxy-4-formamido-L-arabinose from UDP to undecaprenyl phosphate. The modified arabinose is attached to lipid A and is required for resistance to polymyxin and cationic antimicrobial peptides. In Pseudomonas fluorescens (strain ATCC BAA-477 / NRRL B-23932 / Pf-5), this protein is Undecaprenyl-phosphate 4-deoxy-4-formamido-L-arabinose transferase.